The sequence spans 185 residues: Ribosome-recycling factor (185 aa).

The protein belongs to the RRF family.

Its subcellular location is the cytoplasm. Responsible for the release of ribosomes from messenger RNA at the termination of protein biosynthesis. May increase the efficiency of translation by recycling ribosomes from one round of translation to another. This Streptococcus suis (strain 98HAH33) protein is Ribosome-recycling factor.